Consider the following 241-residue polypeptide: Glutathione S-transferase omega-1 (241 aa).

N-acetylserine is present on Ser-2. The region spanning 22 to 101 (GLIRVYSMRF…YLDEAYPGKK (80 aa)) is the GST N-terminal domain. Cys-32 serves as the catalytic Nucleophile. Lys-57 bears the N6-acetyllysine mark. Glutathione contacts are provided by residues Lys-59, Val-72, and 85–86 (ES). Residues 106–225 (DPYEKACQKM…HIEPRDLRAF (120 aa)) form the GST C-terminal domain. An N6-acetyllysine mark is found at Lys-143, Lys-148, and Lys-152.

Homodimer. In terms of tissue distribution, most abundant in the liver and skeletal muscle; also expressed in heart, diaphragm, colon, thymus, kidney, lung, ovaries, spleen, intestine and pancreas.

The protein localises to the cytoplasm. Its subcellular location is the cytosol. The enzyme catalyses RX + glutathione = an S-substituted glutathione + a halide anion + H(+). It carries out the reaction L-dehydroascorbate + 2 glutathione = glutathione disulfide + L-ascorbate. The catalysed reaction is methylarsonate + 2 glutathione + H(+) = methylarsonous acid + glutathione disulfide + H2O. Exhibits glutathione-dependent thiol transferase and dehydroascorbate reductase activities. Has S-(phenacyl)glutathione reductase activity. Also has glutathione S-transferase activity. Participates in the biotransformation of inorganic arsenic and reduces monomethylarsonic acid (MMA) and dimethylarsonic acid. The protein is Glutathione S-transferase omega-1 (GSTO1) of Sus scrofa (Pig).